Consider the following 455-residue polypeptide: UDP-N-acetylmuramate--L-alanine ligase (455 aa).

109 to 115 is a binding site for ATP; sequence GTHGKTT.

It belongs to the MurCDEF family.

Its subcellular location is the cytoplasm. It carries out the reaction UDP-N-acetyl-alpha-D-muramate + L-alanine + ATP = UDP-N-acetyl-alpha-D-muramoyl-L-alanine + ADP + phosphate + H(+). The protein operates within cell wall biogenesis; peptidoglycan biosynthesis. Cell wall formation. This chain is UDP-N-acetylmuramate--L-alanine ligase, found in Caldicellulosiruptor bescii (strain ATCC BAA-1888 / DSM 6725 / KCTC 15123 / Z-1320) (Anaerocellum thermophilum).